The sequence spans 343 residues: MLSNRKKIILKSIIENYSKEAKPVSSKLLTYTLHLNVSSATIRADMAELEKQGYLLKKNYNSSGRIPSFKGYNYYLNNLIKRNEEFIEMFSFVDKIIQKKSFTKEQLIKKVLELLSEFTSYTAIAIGSDILKTSKINKIDLIYLNYFELIILIVTDKGHVQHQNIVLNQKKDVNMLDIKKVIIILNDLLKGKFLFEATLIIQSDIVKKTIGKYINCEEQFIESFVEIFANFVDNNCYLSGVLNILNQPEFNNIEIIKKLINCLTKKELIKIMTIKKRLTFKFSDNIELIQLENFTIISIPYSINKYEKGQIAILGPYRMNYHKVIPLLEYLSVYLSNLYDLNN.

It belongs to the HrcA family.

In terms of biological role, negative regulator of class I heat shock genes (grpE-dnaK-dnaJ and groELS operons). Prevents heat-shock induction of these operons. The polypeptide is Heat-inducible transcription repressor HrcA (Phytoplasma mali (strain AT)).